Reading from the N-terminus, the 557-residue chain is Arginine--tRNA ligase (557 aa).

The 'HIGH' region motif lies at 132-142; sequence ANPTGDLHLGH.

The protein belongs to the class-I aminoacyl-tRNA synthetase family. In terms of assembly, monomer.

It is found in the cytoplasm. The catalysed reaction is tRNA(Arg) + L-arginine + ATP = L-arginyl-tRNA(Arg) + AMP + diphosphate. The sequence is that of Arginine--tRNA ligase from Bacillus pumilus (strain SAFR-032).